Here is an 843-residue protein sequence, read N- to C-terminus: INO80 complex subunit D-B (843 aa).

The segment covering 159 to 175 has biased composition (basic and acidic residues); it reads TLNHKQKQQDHSVDTNH. 5 disordered regions span residues 159 to 216, 221 to 240, 503 to 550, 695 to 726, and 791 to 843; these read TLNH…PTVR, FKTS…STDN, YHHH…LPQG, SLLH…HLTD, and LSTP…TAAP. Composition is skewed to polar residues over residues 176–187, 197–216, and 221–231; these read LRTSSLPSTLSH, RATQ…PTVR, and FKTSSSLQDTH. Over residues 503–540 the composition is skewed to basic residues; it reads YHHHQQIQRHRPLKKAKPPALSKKHKKKGKRGTQRRPQ. Pro residues predominate over residues 705–717; the sequence is PPSPPSPQPPLTP. Low complexity predominate over residues 796–821; that stretch reads QPSSALSALPQSSQTRSTTTSPTSQT.

Belongs to the INO80D family. Component of the chromatin-remodeling INO80 complex.

The protein localises to the nucleus. Its function is as follows. Putative regulatory component of the chromatin remodeling INO80 complex which is involved in transcriptional regulation, DNA replication and probably DNA repair. The polypeptide is INO80 complex subunit D-B (ino80db) (Danio rerio (Zebrafish)).